Reading from the N-terminus, the 469-residue chain is Protein RUFY3 (469 aa).

Phosphothreonine occurs at positions 5 and 12. 2 positions are modified to phosphoserine: serine 34 and serine 49. Threonine 51 carries the post-translational modification Phosphothreonine. The region spanning 95 to 227 (DSDYAPLQQF…IDANFCMKGE (133 aa)) is the RUN domain. Coiled coils occupy residues 271–362 (NRHL…VEKE) and 422–463 (KSEL…AANK).

In terms of assembly, interacts with PAK1. Interacts (via C-terminus) with Ras-related Rab-5 proteins. Interacts (via C-terminus) with Ras-related Rap-2 proteins. Interacts with PIK3CA and PIK3R1. Interacts (via N-terminus) with FSCN1; this interaction induces neuron axon development. Interacts with DBN1. Interacts (via the second coiled coil) with GTP-, but not GDP-bound ARL8A and ARL8B. Interacts with dynactin/DCTN1 and the dynein intermediate chain DYNC1I1/2. Directly interacts with DYNC1LI1. Post-translationally, phosphorylated by PAK1. Isoform 1 is partially phosphorylated. As to expression, overexpressed in gastric cancer cells and tissues (at protein level).

The protein localises to the cytoplasm. It localises to the endomembrane system. The protein resides in the cell projection. Its subcellular location is the invadopodium. It is found in the perikaryon. The protein localises to the growth cone. It localises to the filopodium. The protein resides in the lamellipodium. Its subcellular location is the lysosome. Its function is as follows. ARL8 effector that promotes the coupling of endolysosomes to dynein-dynactin for retrograde transport along microtubules. Acts by binding both GTP-bound ARL8 and dynein-dynactin. In nonneuronal cells, promotes concentration of endolysosomes in the juxtanuclear area. In hippocampal neurons, drives retrograde transport of endolysosomes from the axon to the soma. Plays a role in the generation of neuronal polarity formation and axon growth. Implicated in the formation of a single axon by developing neurons. May inhibit the formation of additional axons by inhibition of PI3K in minor neuronal processes. Plays a role in the formation of F-actin-enriched protrusive structures at the cell periphery. Plays a role in cytoskeletal organization by regulating the subcellular localization of FSCN1 and DBN1 at axonal growth cones. The sequence is that of Protein RUFY3 from Homo sapiens (Human).